A 137-amino-acid polypeptide reads, in one-letter code: Basic phospholipase A2 homolog APL-K49 (137 aa).

An N-terminal signal peptide occupies residues 1-16 (MRTLWIVALLLVGVEG). Intrachain disulfides connect cysteine 42–cysteine 131, cysteine 44–cysteine 60, cysteine 59–cysteine 111, cysteine 65–cysteine 137, cysteine 66–cysteine 104, cysteine 73–cysteine 97, and cysteine 91–cysteine 102. Residues 121–133 (KKYKAYFKLKCKK) are important for membrane-damaging activities in eukaryotes and bacteria; heparin-binding.

Belongs to the phospholipase A2 family. Group II subfamily. K49 sub-subfamily. Monomer. Expressed by the venom gland.

It localises to the secreted. Functionally, snake venom phospholipase A2 (PLA2) that lacks enzymatic activity. Does not show antibacterial activity. Is myotoxic and displays edema-inducing activities. A model of myotoxic mechanism has been proposed: an apo Lys49-PLA2 is activated by the entrance of a hydrophobic molecule (e.g. fatty acid) at the hydrophobic channel of the protein leading to a reorientation of a monomer. This reorientation causes a transition between 'inactive' to 'active' states, causing alignment of C-terminal and membrane-docking sites (MDoS) side-by-side and putting the membrane-disruption sites (MDiS) in the same plane, exposed to solvent and in a symmetric position for both monomers. The MDoS region stabilizes the toxin on membrane by the interaction of charged residues with phospholipid head groups. Subsequently, the MDiS region destabilizes the membrane with penetration of hydrophobic residues. This insertion causes a disorganization of the membrane, allowing an uncontrolled influx of ions (i.e. calcium and sodium), and eventually triggering irreversible intracellular alterations and cell death. The protein is Basic phospholipase A2 homolog APL-K49 of Agkistrodon piscivorus leucostoma (Western cottonmouth).